A 434-amino-acid chain; its full sequence is N-acylneuraminate cytidylyltransferase (434 aa).

Met1 carries the post-translational modification N-acetylmethionine. The disordered stretch occupies residues 1–42; the sequence is MDSVEKGAATSVSNPRGRPSRGRPPKLQRNSRGGQGRGVEKP. A BC1 motif motif is present at residues 15–31; the sequence is PRGRPSRGRPPKLQRNS. An omega-N-methylarginine mark is found at Arg37 and Arg52. Positions 52, 62, 111, 120, 122, and 143 each coordinate substrate. Residues 200-206 carry the BC2 motif motif; sequence KRPRRQD. Arg201 is a catalytic residue. A BC3 motif motif is present at residues 269 to 276; the sequence is KEKLKEIK.

The protein belongs to the CMP-NeuNAc synthase family. Homotetramer; the active enzyme is formed by a dimer of dimers. In terms of tissue distribution, ubiquitously expressed. Expressed in pancreas, kidney, liver, skeletal muscle, lung, placenta, brain, heart, colon, PBL, small intestine, ovary, testis, prostate, thymus and spleen.

The protein resides in the nucleus. It catalyses the reaction an N-acylneuraminate + CTP = a CMP-N-acyl-beta-neuraminate + diphosphate. It functions in the pathway amino-sugar metabolism; N-acetylneuraminate metabolism. In terms of biological role, catalyzes the activation of N-acetylneuraminic acid (NeuNAc) to cytidine 5'-monophosphate N-acetylneuraminic acid (CMP-NeuNAc), a substrate required for the addition of sialic acid. Has some activity toward NeuNAc, N-glycolylneuraminic acid (Neu5Gc) or 2-keto-3-deoxy-D-glycero-D-galacto-nononic acid (KDN). This is N-acylneuraminate cytidylyltransferase (CMAS) from Homo sapiens (Human).